The following is a 342-amino-acid chain: S-adenosylmethionine:tRNA ribosyltransferase-isomerase (342 aa).

It belongs to the QueA family. Monomer.

The protein resides in the cytoplasm. It catalyses the reaction 7-aminomethyl-7-carbaguanosine(34) in tRNA + S-adenosyl-L-methionine = epoxyqueuosine(34) in tRNA + adenine + L-methionine + 2 H(+). The protein operates within tRNA modification; tRNA-queuosine biosynthesis. Its function is as follows. Transfers and isomerizes the ribose moiety from AdoMet to the 7-aminomethyl group of 7-deazaguanine (preQ1-tRNA) to give epoxyqueuosine (oQ-tRNA). This is S-adenosylmethionine:tRNA ribosyltransferase-isomerase from Streptococcus pyogenes serotype M2 (strain MGAS10270).